A 584-amino-acid chain; its full sequence is Sperm-associated microtubule inner protein 4 (584 aa).

It localises to the cytoplasm. The protein resides in the cytoskeleton. It is found in the microtubule organizing center. Its subcellular location is the centrosome. The protein localises to the flagellum axoneme. Its function is as follows. Microtubule inner protein (MIP) part of the dynein-decorated doublet microtubules (DMTs) in flagellum axoneme. May serve to reinforce and thus stabilize the microtubule structure in the sperm flagella. This chain is Sperm-associated microtubule inner protein 4 (SPMIP4), found in Bos taurus (Bovine).